We begin with the raw amino-acid sequence, 194 residues long: Protein GrpE (194 aa).

Positions 1-44 (MAEEKQNEELNEQEELNETEAETAEAEQTAAEADAPAEETQTEM) are disordered. The segment covering 9-25 (ELNEQEELNETEAETAE) has biased composition (acidic residues).

The protein belongs to the GrpE family. In terms of assembly, homodimer.

The protein localises to the cytoplasm. Its function is as follows. Participates actively in the response to hyperosmotic and heat shock by preventing the aggregation of stress-denatured proteins, in association with DnaK and GrpE. It is the nucleotide exchange factor for DnaK and may function as a thermosensor. Unfolded proteins bind initially to DnaJ; upon interaction with the DnaJ-bound protein, DnaK hydrolyzes its bound ATP, resulting in the formation of a stable complex. GrpE releases ADP from DnaK; ATP binding to DnaK triggers the release of the substrate protein, thus completing the reaction cycle. Several rounds of ATP-dependent interactions between DnaJ, DnaK and GrpE are required for fully efficient folding. This is Protein GrpE from Bacillus licheniformis (strain ATCC 14580 / DSM 13 / JCM 2505 / CCUG 7422 / NBRC 12200 / NCIMB 9375 / NCTC 10341 / NRRL NRS-1264 / Gibson 46).